Here is a 273-residue protein sequence, read N- to C-terminus: MEEQQKEGEAEVAEHWFSKWERQCLAEAEQEEQLPPELQEEAAAELAGLKSEKQKLWHLFQISATAVAQLYKDSGCQQQGLSMWDPFQNAAMAVTSLYKESGDAHQRSFDLGVQVGHQRRIKDVLEWVKKGRSTIRREDLISFLCGKVPPAPPPPRTPRTPPKPPTGVTSQAVATESSSSVDVDLQPFQEAIALHGLSGAMAGISMRSGDSPQDSGVASSGRRKTSFLEDDLNPFDSEELALHLDSGGIRKRTSAQCSDGITDSPIQKRNRMV.

3 disordered regions span residues 146-181, 204-230, and 251-273; these read GKVPPAPPPPRTPRTPPKPPTGVTSQAVATESSSSV, ISMRSGDSPQDSGVASSGRRKTSFLED, and KRTSAQCSDGITDSPIQKRNRMV. The segment covering 149 to 165 has biased composition (pro residues); it reads PPAPPPPRTPRTPPKPP. Polar residues-rich tracts occupy residues 170 to 181, 208 to 218, and 254 to 267; these read SQAVATESSSSV, SGDSPQDSGVA, and SAQCSDGITDSPIQ. The tract at residues 249 to 273 is nuclear localization signal; that stretch reads IRKRTSAQCSDGITDSPIQKRNRMV.

This sequence belongs to the HAPSTR1 family. Homooligomer. Heterooligomer with HAPSTR1; the interaction is direct and stabilizes HAPSTR1 independently of HUWE1. Interacts with HUWE1. As to expression, expressed in a tissue-restricted manner compared to HAPSTR1.

Its subcellular location is the nucleus. Together with HAPSTR1 plays a central regulatory role in the cellular response to molecular stressors, such as DNA damage, nutrient scarcity, and protein misfolding. Regulates these multiple stress response signaling pathways by stabilizing HAPSTR1, but also independently of HAPSTR1. This Homo sapiens (Human) protein is HUWE1-associated protein modifying stress responses 2.